The sequence spans 124 residues: Acidic phospholipase A2 (124 aa).

7 cysteine pairs are disulfide-bonded: C26-C116, C28-C44, C43-C95, C49-C124, C50-C88, C57-C81, and C75-C86. Residues Y27, G29, and G31 each contribute to the Ca(2+) site. The active site involves H47. Ca(2+) is bound at residue D48. D89 is a catalytic residue.

The protein belongs to the phospholipase A2 family. Group II subfamily. D49 sub-subfamily. The cofactor is Ca(2+). Expressed by the venom gland.

The protein resides in the secreted. The catalysed reaction is a 1,2-diacyl-sn-glycero-3-phosphocholine + H2O = a 1-acyl-sn-glycero-3-phosphocholine + a fatty acid + H(+). Snake venom phospholipase A2 (PLA2) that inhibits ADP-induced platelet aggregation. PLA2 catalyzes the calcium-dependent hydrolysis of the 2-acyl groups in 3-sn-phosphoglycerides. This chain is Acidic phospholipase A2, found in Gloydius ussuriensis (Ussuri mamushi).